The sequence spans 115 residues: Tyrosine-protein phosphatase 21 (115 aa).

The Tyrosine-protein phosphatase domain occupies 1–115 (WLMIVEKECR…EIGGDAPMVV (115 aa)). D83 serves as a coordination point for substrate.

It belongs to the protein-tyrosine phosphatase family.

The catalysed reaction is O-phospho-L-tyrosyl-[protein] + H2O = L-tyrosyl-[protein] + phosphate. The sequence is that of Tyrosine-protein phosphatase 21 (STY-21) from Styela plicata (Wrinkled sea squirt).